Here is an 840-residue protein sequence, read N- to C-terminus: Serotype-specific mannosyltransferase WbdA (840 aa).

The interval 2 to 399 (HILIDVQGYQ…WANTAHLAIE (398 aa)) is alpha-(1-&gt;2)-mannosyltransferase. Positions 456–829 (KLLVDISVLA…WKQSAEFLLK (374 aa)) are alpha-(1-&gt;3)-mannosyltransferase.

It belongs to the glycosyltransferase group 1 family. Glycosyltransferase 4 subfamily. As to quaternary structure, monomer. Interacts with the C-terminal region of WbdD. Interacts with WbdD via a surface-exposed alpha-helix in the C-terminal mannosyltransferase domain. However, the C-terminal domain is unable to interact with WbdD in the absence of its N-terminal partner.

It is found in the cell inner membrane. The catalysed reaction is [alpha-D-Man-(1-&gt;3)-alpha-D-Man-(1-&gt;3)-alpha-D-Man-(1-&gt;2)-alpha-D-Man-(1-&gt;2)](n)-alpha-D-Man-(1-&gt;3)-alpha-D-Man-(1-&gt;3)-alpha-D-Man-(1-&gt;3)-alpha-D-GlcNAc-di-trans,octa-cis-undecaprenyl diphosphate + 2 GDP-alpha-D-mannose = alpha-D-Man-(1-&gt;2)-alpha-D-Man-(1-&gt;2)-[alpha-D-Man-(1-&gt;3)-alpha-D-Man-(1-&gt;3)-alpha-D-Man-(1-&gt;2)-alpha-D-Man-(1-&gt;2)](n)-alpha-D-Man-(1-&gt;3)-alpha-D-Man-(1-&gt;3)-alpha-D-Man-(1-&gt;3)-alpha-D-GlcNAc-di-trans,octa-cis-undecaprenyl diphosphate + 2 GDP + 2 H(+). It catalyses the reaction alpha-D-Man-(1-&gt;2)-alpha-D-Man-(1-&gt;2)-[alpha-D-Man-(1-&gt;3)-alpha-D-Man-(1-&gt;3)-alpha-D-Man-(1-&gt;2)-alpha-D-Man-(1-&gt;2)](n)-alpha-D-Man-(1-&gt;3)-alpha-D-Man-(1-&gt;3)-alpha-D-Man-(1-&gt;3)-alpha-D-GlcNAc-di-trans,octa-cis-undecaprenyl diphosphate + 2 GDP-alpha-D-mannose = [alpha-D-Man-(1-&gt;3)-alpha-D-Man-(1-&gt;3)-alpha-D-Man-(1-&gt;2)-alpha-D-Man-(1-&gt;2)](n+1)-alpha-D-Man-(1-&gt;3)-alpha-D-Man-(1-&gt;3)-alpha-D-Man-(1-&gt;3)-alpha-D-GlcNAc-di-trans,octa-cis-undecaprenyl diphosphate + 2 GDP + 2 H(+). It participates in bacterial outer membrane biogenesis; LPS O-antigen biosynthesis. Its activity is regulated as follows. The alpha-(1-&gt;2)-mannosyltransferase activity of the N-terminal domain is regulated by the activity of the C-terminal alpha-(1-&gt;3)-mannosyltransferase. The relative concentration of WbdA and WbdD is critical in determining the O polysaccharide (OPS) modal chain length. OPS chain length increases with increasing concentration of WbdA, but the maximum length does not increase beyond the wild-type modal length, despite substantial increases in WbdA concentration. Its function is as follows. Mannosyltransferase involved in the biosynthesis of the repeat unit of the lipopolysaccharide (LPS) O-antigen region. Catalyzes the polymerization of a tetrasaccharide repeat unit containing two alpha-(1-&gt;3)- and two alpha-(1-&gt;2)-linked mannopyranose residues. Extension is terminated by the action of the chain terminator bifunctional methyltransferase/kinase WbdD. The chain is Serotype-specific mannosyltransferase WbdA from Escherichia coli.